We begin with the raw amino-acid sequence, 338 residues long: Lipoate-protein ligase A (338 aa).

One can recognise a BPL/LPL catalytic domain in the interval 29–216 (PATQRVLFLW…AFFAHYGERV (188 aa)). ATP is bound by residues R71, 76-79 (GAVF), and K134. K134 lines the (R)-lipoate pocket.

The protein belongs to the LplA family. Monomer.

It is found in the cytoplasm. It catalyses the reaction L-lysyl-[lipoyl-carrier protein] + (R)-lipoate + ATP = N(6)-[(R)-lipoyl]-L-lysyl-[lipoyl-carrier protein] + AMP + diphosphate + H(+). Its pathway is protein modification; protein lipoylation via exogenous pathway; protein N(6)-(lipoyl)lysine from lipoate: step 1/2. The protein operates within protein modification; protein lipoylation via exogenous pathway; protein N(6)-(lipoyl)lysine from lipoate: step 2/2. Its function is as follows. Catalyzes both the ATP-dependent activation of exogenously supplied lipoate to lipoyl-AMP and the transfer of the activated lipoyl onto the lipoyl domains of lipoate-dependent enzymes. The polypeptide is Lipoate-protein ligase A (Salmonella dublin (strain CT_02021853)).